Here is a 236-residue protein sequence, read N- to C-terminus: MNIFDRKINFDALFKFSHITPSTQQHLKKVYASFALCMFVAAAGAYIHVVTHFIQAGLLSALGSLGLMIWLMATPHSHETEQKRLGLLAGFAFLTGVGLGPALDLCIAINPSILPTAFMGTAMIFTCFTLSALYARRRSYLFLGGILMSAMSLMLLSSLGNLFFGSVWLFQANLYMGLVVMCGFVLFDTQLIIEKAENGDKDYIWHCVDLFLDFVTLFRKLMMILAMNEKDKKKKK.

Topologically, residues 1-29 (MNIFDRKINFDALFKFSHITPSTQQHLKK) are cytoplasmic. Lys-7 is covalently cross-linked (Glycyl lysine isopeptide (Lys-Gly) (interchain with G-Cter in ubiquitin)). The chain crosses the membrane as a helical span at residues 30–50 (VYASFALCMFVAAAGAYIHVV). Residues 51–52 (TH) lie on the Lumenal side of the membrane. A helical transmembrane segment spans residues 53–73 (FIQAGLLSALGSLGLMIWLMA). At 74-86 (TPHSHETEQKRLG) the chain is on the cytoplasmic side. A helical membrane pass occupies residues 87-107 (LLAGFAFLTGVGLGPALDLCI). Residues 108-112 (AINPS) are Lumenal-facing. The chain crosses the membrane as a helical span at residues 113 to 133 (ILPTAFMGTAMIFTCFTLSAL). Topologically, residues 134 to 139 (YARRRS) are cytoplasmic. The helical transmembrane segment at 140-160 (YLFLGGILMSAMSLMLLSSLG) threads the bilayer. Residues 161–166 (NLFFGS) are Lumenal-facing. A helical membrane pass occupies residues 167 to 187 (VWLFQANLYMGLVVMCGFVLF). The Cytoplasmic portion of the chain corresponds to 188–206 (DTQLIIEKAENGDKDYIWH). Positions 207–227 (CVDLFLDFVTLFRKLMMILAM) form an intramembrane region, helical. The Cytoplasmic segment spans residues 228-236 (NEKDKKKKK).

It belongs to the BI1 family. As to quaternary structure, interacts with BCL2 and BCL2L1. Interacts with ERN1. Ubiquitinated by BFAR, leading to proteasomal degradation.

The protein resides in the endoplasmic reticulum membrane. Its function is as follows. Endoplasmic reticulum (ER)-resident protein that confers cellular protection as an anti-apoptotic protein by limiting multiple stress-inducing pathways surrounding the endoplasmic reticulum and mitochondria. Inhibits the activities of the key sensor for the endoplasmic reticulum unfolded protein response IRE1alpha/ERN1 both directly and by blocking BAX/BAK binding. Modulates ER calcium homeostasis by acting as a calcium-leak channel. Negatively regulates autophagy and autophagosome formation, especially during periods of nutrient deprivation, and reduces cell survival during starvation. This Bos taurus (Bovine) protein is Bax inhibitor 1 (TMBIM6).